The primary structure comprises 116 residues: Peptidyl-tRNA hydrolase (116 aa).

Belongs to the PTH2 family.

The protein resides in the cytoplasm. The catalysed reaction is an N-acyl-L-alpha-aminoacyl-tRNA + H2O = an N-acyl-L-amino acid + a tRNA + H(+). Functionally, the natural substrate for this enzyme may be peptidyl-tRNAs which drop off the ribosome during protein synthesis. In Methanococcus maripaludis (strain DSM 14266 / JCM 13030 / NBRC 101832 / S2 / LL), this protein is Peptidyl-tRNA hydrolase (pth).